The following is a 119-amino-acid chain: Holo-[acyl-carrier-protein] synthase (119 aa).

2 residues coordinate Mg(2+): Asp8 and Glu58.

The protein belongs to the P-Pant transferase superfamily. AcpS family. Mg(2+) is required as a cofactor.

The protein localises to the cytoplasm. It carries out the reaction apo-[ACP] + CoA = holo-[ACP] + adenosine 3',5'-bisphosphate + H(+). Its function is as follows. Transfers the 4'-phosphopantetheine moiety from coenzyme A to a Ser of acyl-carrier-protein. This is Holo-[acyl-carrier-protein] synthase from Bacillus cereus (strain ATCC 14579 / DSM 31 / CCUG 7414 / JCM 2152 / NBRC 15305 / NCIMB 9373 / NCTC 2599 / NRRL B-3711).